We begin with the raw amino-acid sequence, 630 residues long: Polyphenol oxidase A, chloroplastic (630 aa).

Positions 1–25 (MASLCSNSSSTSLKTPFTSSTTCLS) are disordered. Residues 1 to 87 (MASLCSNSSS…ANAIPLAASA (87 aa)) constitute a chloroplast transit peptide. Cystine bridges form between cysteine 98/cysteine 114 and cysteine 113/cysteine 181. Positions 180, 198, 207, 328, 332, and 370 each coordinate Cu cation. The segment at residues 184–198 (CNGGYSIDGKVLQVH) is a cross-link (2'-(S-cysteinyl)-histidine (Cys-His)).

Belongs to the tyrosinase family. The cofactor is Cu(2+).

It is found in the plastid. It localises to the chloroplast thylakoid lumen. It catalyses the reaction 2 catechol + O2 = 2 1,2-benzoquinone + 2 H2O. Functionally, catalyzes the oxidation of mono- and o-diphenols to o-diquinones. The sequence is that of Polyphenol oxidase A, chloroplastic from Solanum lycopersicum (Tomato).